The following is a 425-amino-acid chain: Serine--tRNA ligase (425 aa).

Position 233–235 (Thr-233–Glu-235) interacts with L-serine. Arg-264–Glu-266 is a binding site for ATP. Glu-287 serves as a coordination point for L-serine. Residue Glu-351–Ser-354 participates in ATP binding. Position 387 (Ser-387) interacts with L-serine.

The protein belongs to the class-II aminoacyl-tRNA synthetase family. Type-1 seryl-tRNA synthetase subfamily. In terms of assembly, homodimer. The tRNA molecule binds across the dimer.

It is found in the cytoplasm. The enzyme catalyses tRNA(Ser) + L-serine + ATP = L-seryl-tRNA(Ser) + AMP + diphosphate + H(+). The catalysed reaction is tRNA(Sec) + L-serine + ATP = L-seryl-tRNA(Sec) + AMP + diphosphate + H(+). It participates in aminoacyl-tRNA biosynthesis; selenocysteinyl-tRNA(Sec) biosynthesis; L-seryl-tRNA(Sec) from L-serine and tRNA(Sec): step 1/1. Functionally, catalyzes the attachment of serine to tRNA(Ser). Is also able to aminoacylate tRNA(Sec) with serine, to form the misacylated tRNA L-seryl-tRNA(Sec), which will be further converted into selenocysteinyl-tRNA(Sec). This is Serine--tRNA ligase from Thermotoga maritima (strain ATCC 43589 / DSM 3109 / JCM 10099 / NBRC 100826 / MSB8).